A 225-amino-acid polypeptide reads, in one-letter code: ATP phosphoribosyltransferase (225 aa).

This sequence belongs to the ATP phosphoribosyltransferase family. Short subfamily. In terms of assembly, heteromultimer composed of HisG and HisZ subunits.

It is found in the cytoplasm. It catalyses the reaction 1-(5-phospho-beta-D-ribosyl)-ATP + diphosphate = 5-phospho-alpha-D-ribose 1-diphosphate + ATP. It participates in amino-acid biosynthesis; L-histidine biosynthesis; L-histidine from 5-phospho-alpha-D-ribose 1-diphosphate: step 1/9. Its function is as follows. Catalyzes the condensation of ATP and 5-phosphoribose 1-diphosphate to form N'-(5'-phosphoribosyl)-ATP (PR-ATP). Has a crucial role in the pathway because the rate of histidine biosynthesis seems to be controlled primarily by regulation of HisG enzymatic activity. This is ATP phosphoribosyltransferase from Herminiimonas arsenicoxydans.